The chain runs to 330 residues: Carbonic anhydrase (330 aa).

Residues 1-109 are chloroplast transit peptide-like; the sequence is MSAASAFAMN…AATRIDQITA (109 aa).

The protein belongs to the beta-class carbonic anhydrase family.

It is found in the cytoplasm. The enzyme catalyses hydrogencarbonate + H(+) = CO2 + H2O. Reversible hydration of carbon dioxide. The polypeptide is Carbonic anhydrase (Flaveria bidentis (Coastal plain yellowtops)).